Consider the following 796-residue polypeptide: Probable phosphoketolase 2 (796 aa).

Belongs to the XFP family. It depends on thiamine diphosphate as a cofactor.

This is Probable phosphoketolase 2 from Lactiplantibacillus plantarum (strain ATCC BAA-793 / NCIMB 8826 / WCFS1) (Lactobacillus plantarum).